The following is a 756-amino-acid chain: Polyribonucleotide nucleotidyltransferase (756 aa).

Mg(2+) is bound by residues D492 and D498. The 60-residue stretch at 559 to 618 (PQHAEVFVNPDVIRIIIGPGGKNIKAITAATGASIDIEDSGKVSIFAPTYEAMEMAREMV) folds into the KH domain. The S1 motif domain occupies 628–702 (GKNYVGKVRK…SRKAVLLEEQ (75 aa)). Residues 703 to 756 (GVEWNPEDTARPSGPPRDRGDRGDRGGRGDRGGDRRGGDRGGRGGDRGRGGDRR) form a disordered region. The span at 718–756 (PRDRGDRGDRGGRGDRGGDRRGGDRGGRGGDRGRGGDRR) shows a compositional bias: basic and acidic residues.

The protein belongs to the polyribonucleotide nucleotidyltransferase family. The cofactor is Mg(2+).

Its subcellular location is the cytoplasm. It catalyses the reaction RNA(n+1) + phosphate = RNA(n) + a ribonucleoside 5'-diphosphate. Functionally, involved in mRNA degradation. Catalyzes the phosphorolysis of single-stranded polyribonucleotides processively in the 3'- to 5'-direction. The polypeptide is Polyribonucleotide nucleotidyltransferase (Nitratidesulfovibrio vulgaris (strain DSM 19637 / Miyazaki F) (Desulfovibrio vulgaris)).